Consider the following 289-residue polypeptide: Oxaloacetate decarboxylase (289 aa).

S50 contributes to the substrate binding site. D88 lines the Mg(2+) pocket. Substrate is bound by residues R159 and H235.

It belongs to the isocitrate lyase/PEP mutase superfamily. Oxaloacetate decarboxylase family. In terms of assembly, homotetramer; dimer of dimers. Mg(2+) serves as cofactor.

It catalyses the reaction oxaloacetate + H(+) = pyruvate + CO2. Its function is as follows. Catalyzes the decarboxylation of oxaloacetate into pyruvate. Seems to play a role in maintaining cellular concentrations of bicarbonate and pyruvate. The protein is Oxaloacetate decarboxylase of Pseudomonas entomophila (strain L48).